The chain runs to 231 residues: Protein fmp52-2, mitochondrial (231 aa).

The N-terminal 46 residues, 1–46 (MTMTTAAVFGCTGAVGSQILATLLAIDTFPSVKTISRRLPNVQSPK), are a transit peptide targeting the mitochondrion.

It belongs to the FMP52 family.

The protein localises to the mitochondrion outer membrane. The polypeptide is Protein fmp52-2, mitochondrial (fmp522) (Neosartorya fischeri (strain ATCC 1020 / DSM 3700 / CBS 544.65 / FGSC A1164 / JCM 1740 / NRRL 181 / WB 181) (Aspergillus fischerianus)).